The following is a 118-amino-acid chain: uncharacterized protein (118 aa).

Its subcellular location is the mitochondrion. This is an uncharacterized protein from Arabidopsis thaliana (Mouse-ear cress).